A 252-amino-acid chain; its full sequence is Hydroxyacylglutathione hydrolase (252 aa).

7 residues coordinate Zn(2+): His54, His56, Asp58, His59, His111, Asp128, and His166.

This sequence belongs to the metallo-beta-lactamase superfamily. Glyoxalase II family. In terms of assembly, monomer. Zn(2+) is required as a cofactor.

The catalysed reaction is an S-(2-hydroxyacyl)glutathione + H2O = a 2-hydroxy carboxylate + glutathione + H(+). It participates in secondary metabolite metabolism; methylglyoxal degradation; (R)-lactate from methylglyoxal: step 2/2. Functionally, thiolesterase that catalyzes the hydrolysis of S-D-lactoyl-glutathione to form glutathione and D-lactic acid. The polypeptide is Hydroxyacylglutathione hydrolase (Vibrio parahaemolyticus serotype O3:K6 (strain RIMD 2210633)).